The following is a 241-amino-acid chain: Small ribosomal subunit protein uS2 (241 aa).

This sequence belongs to the universal ribosomal protein uS2 family.

The chain is Small ribosomal subunit protein uS2 from Buchnera aphidicola subsp. Cinara cedri (strain Cc).